We begin with the raw amino-acid sequence, 25 residues long: Bombinin-like peptide 4 (25 aa).

Phe25 is modified (phenylalanine amide).

The protein belongs to the bombinin family. In terms of tissue distribution, expressed by the skin glands.

It is found in the secreted. In terms of biological role, has antimicrobial activity, but no hemolytic activity. Preference on killing Gram-negative non-enteric bacteria. The sequence is that of Bombinin-like peptide 4 from Bombina orientalis (Oriental fire-bellied toad).